The chain runs to 377 residues: Chaperone protein DnaJ (377 aa).

The 66-residue stretch at 5–70 (DCYEVLGISR…QKKAAYDQYG (66 aa)) folds into the J domain. The CR-type zinc finger occupies 133–211 (GISKEIQIPT…CHGHGRYERS (79 aa)). The Zn(2+) site is built by Cys146, Cys149, Cys163, Cys166, Cys185, Cys188, Cys199, and Cys202. CXXCXGXG motif repeat units lie at residues 146 to 153 (CEQCNGSG), 163 to 170 (CGTCYGQG), 185 to 192 (CPTCRGQG), and 199 to 206 (CHKCHGHG).

The protein belongs to the DnaJ family. In terms of assembly, homodimer. The cofactor is Zn(2+).

The protein localises to the cytoplasm. Its function is as follows. Participates actively in the response to hyperosmotic and heat shock by preventing the aggregation of stress-denatured proteins and by disaggregating proteins, also in an autonomous, DnaK-independent fashion. Unfolded proteins bind initially to DnaJ; upon interaction with the DnaJ-bound protein, DnaK hydrolyzes its bound ATP, resulting in the formation of a stable complex. GrpE releases ADP from DnaK; ATP binding to DnaK triggers the release of the substrate protein, thus completing the reaction cycle. Several rounds of ATP-dependent interactions between DnaJ, DnaK and GrpE are required for fully efficient folding. Also involved, together with DnaK and GrpE, in the DNA replication of plasmids through activation of initiation proteins. The polypeptide is Chaperone protein DnaJ (Psychromonas ingrahamii (strain DSM 17664 / CCUG 51855 / 37)).